Reading from the N-terminus, the 241-residue chain is Purine nucleoside phosphorylase DeoD-type (241 aa).

His-5 serves as a coordination point for a purine D-ribonucleoside. Residues Gly-21, Arg-25, Arg-44, and 88 to 91 (RVGS) contribute to the phosphate site. A purine D-ribonucleoside contacts are provided by residues 180–182 (EME) and 204–205 (SD). The active-site Proton donor is the Asp-205.

The protein belongs to the PNP/UDP phosphorylase family. As to quaternary structure, homohexamer; trimer of homodimers.

It catalyses the reaction a purine D-ribonucleoside + phosphate = a purine nucleobase + alpha-D-ribose 1-phosphate. It carries out the reaction a purine 2'-deoxy-D-ribonucleoside + phosphate = a purine nucleobase + 2-deoxy-alpha-D-ribose 1-phosphate. Catalyzes the reversible phosphorolytic breakdown of the N-glycosidic bond in the beta-(deoxy)ribonucleoside molecules, with the formation of the corresponding free purine bases and pentose-1-phosphate. This chain is Purine nucleoside phosphorylase DeoD-type, found in Yersinia enterocolitica serotype O:8 / biotype 1B (strain NCTC 13174 / 8081).